We begin with the raw amino-acid sequence, 762 residues long: 5-methyltetrahydropteroyltriglutamate--homocysteine methyltransferase (762 aa).

Residues 18 to 21 (REWK) and K112 contribute to the 5-methyltetrahydropteroyltri-L-glutamate site. Residues 435 to 437 (IGS) and E488 each bind L-homocysteine. L-methionine is bound by residues 435–437 (IGS) and E488. 5-methyltetrahydropteroyltri-L-glutamate-binding positions include 519-520 (RC) and W565. Residue D603 coordinates L-homocysteine. Position 603 (D603) interacts with L-methionine. E609 contributes to the 5-methyltetrahydropteroyltri-L-glutamate binding site. Zn(2+) contacts are provided by H645, C647, and E669. The Proton donor role is filled by H698. C730 is a Zn(2+) binding site.

It belongs to the vitamin-B12 independent methionine synthase family. Requires Zn(2+) as cofactor.

The enzyme catalyses 5-methyltetrahydropteroyltri-L-glutamate + L-homocysteine = tetrahydropteroyltri-L-glutamate + L-methionine. It participates in amino-acid biosynthesis; L-methionine biosynthesis via de novo pathway; L-methionine from L-homocysteine (MetE route): step 1/1. Its function is as follows. Catalyzes the transfer of a methyl group from 5-methyltetrahydrofolate to homocysteine resulting in methionine formation. The chain is 5-methyltetrahydropteroyltriglutamate--homocysteine methyltransferase from Bacillus licheniformis (strain ATCC 14580 / DSM 13 / JCM 2505 / CCUG 7422 / NBRC 12200 / NCIMB 9375 / NCTC 10341 / NRRL NRS-1264 / Gibson 46).